The chain runs to 759 residues: Glycerophosphodiester phosphodiesterase GDPDL3 (759 aa).

Residues 1–27 (MRGLLRASSLLLCGVILIQLLAAQIHA) form the signal peptide. Residues 28 to 738 (QSKKPKSPWP…TNAQAPSGQT (711 aa)) lie on the Extracellular side of the membrane. Residues 44–344 (PLVIARGGFS…DFPITASASL (301 aa)) enclose the GP-PDE 1 domain. 12 N-linked (GlcNAc...) asparagine glycosylation sites follow: Asn-99, Asn-186, Asn-242, Asn-251, Asn-326, Asn-353, Asn-413, Asn-424, Asn-488, Asn-528, Asn-540, and Asn-647. One can recognise a GP-PDE 2 domain in the interval 360–661 (FLVITKDGAS…EFPFTAARYK (302 aa)). Residues 702 to 734 (FTDADVTEPPLPPVTAKAPTSSPGTPSTNAQAP) are disordered. A compositionally biased stretch (polar residues) spans 719 to 734 (APTSSPGTPSTNAQAP). The chain crosses the membrane as a helical span at residues 739–759 (RITLSLLLSVFAMVLASLLLL).

The protein belongs to the glycerophosphoryl diester phosphodiesterase family. In terms of tissue distribution, expressed in roots, shoots, rosette and cauline leaves, stems, flowers and siliques.

The protein resides in the cell membrane. The catalysed reaction is a sn-glycero-3-phosphodiester + H2O = an alcohol + sn-glycerol 3-phosphate + H(+). Involved in primary cell wall organization. Required for the accumulation of crystalline cellulose. The sequence is that of Glycerophosphodiester phosphodiesterase GDPDL3 from Arabidopsis thaliana (Mouse-ear cress).